The sequence spans 471 residues: Bifunctional protein GlmU (471 aa).

The segment at 1-232 is pyrophosphorylase; the sequence is MSDITAVLLA…EEDALAPNDR (232 aa). Residues 9 to 12, Lys23, Gln73, 78 to 79, 102 to 104, Gly141, Glu157, and Asn230 each bind UDP-N-acetyl-alpha-D-glucosamine; these read LAAG, GT, and YGD. Residue Asp104 participates in Mg(2+) binding. Mg(2+) is bound at residue Asn230. Residues 233 to 253 form a linker region; it reads VELARAEARLRRQINERHMRN. The tract at residues 254–471 is N-acetyltransferase; the sequence is GVTIINPDAT…RQRKMNREGT (218 aa). UDP-N-acetyl-alpha-D-glucosamine is bound by residues Arg335 and Lys353. Residue His365 is the Proton acceptor of the active site. Positions 368 and 379 each coordinate UDP-N-acetyl-alpha-D-glucosamine. Residues Ala382, 388 to 389, Ala425, and Arg444 contribute to the acetyl-CoA site; that span reads NY.

It in the N-terminal section; belongs to the N-acetylglucosamine-1-phosphate uridyltransferase family. The protein in the C-terminal section; belongs to the transferase hexapeptide repeat family. Homotrimer. The cofactor is Mg(2+).

It is found in the cytoplasm. It carries out the reaction alpha-D-glucosamine 1-phosphate + acetyl-CoA = N-acetyl-alpha-D-glucosamine 1-phosphate + CoA + H(+). It catalyses the reaction N-acetyl-alpha-D-glucosamine 1-phosphate + UTP + H(+) = UDP-N-acetyl-alpha-D-glucosamine + diphosphate. It functions in the pathway nucleotide-sugar biosynthesis; UDP-N-acetyl-alpha-D-glucosamine biosynthesis; N-acetyl-alpha-D-glucosamine 1-phosphate from alpha-D-glucosamine 6-phosphate (route II): step 2/2. The protein operates within nucleotide-sugar biosynthesis; UDP-N-acetyl-alpha-D-glucosamine biosynthesis; UDP-N-acetyl-alpha-D-glucosamine from N-acetyl-alpha-D-glucosamine 1-phosphate: step 1/1. Its pathway is bacterial outer membrane biogenesis; LPS lipid A biosynthesis. Catalyzes the last two sequential reactions in the de novo biosynthetic pathway for UDP-N-acetylglucosamine (UDP-GlcNAc). The C-terminal domain catalyzes the transfer of acetyl group from acetyl coenzyme A to glucosamine-1-phosphate (GlcN-1-P) to produce N-acetylglucosamine-1-phosphate (GlcNAc-1-P), which is converted into UDP-GlcNAc by the transfer of uridine 5-monophosphate (from uridine 5-triphosphate), a reaction catalyzed by the N-terminal domain. In Symbiobacterium thermophilum (strain DSM 24528 / JCM 14929 / IAM 14863 / T), this protein is Bifunctional protein GlmU.